The chain runs to 497 residues: Lysine--tRNA ligase (497 aa).

Residues Glu405 and Glu412 each coordinate Mg(2+).

This sequence belongs to the class-II aminoacyl-tRNA synthetase family. Homodimer. The cofactor is Mg(2+).

The protein resides in the cytoplasm. The enzyme catalyses tRNA(Lys) + L-lysine + ATP = L-lysyl-tRNA(Lys) + AMP + diphosphate. The protein is Lysine--tRNA ligase of Gloeobacter violaceus (strain ATCC 29082 / PCC 7421).